The following is a 428-amino-acid chain: Trigger factor (428 aa).

In terms of domain architecture, PPIase FKBP-type spans 163–248 (GDTVVIDFEG…LHEIKTKQLP (86 aa)).

Belongs to the FKBP-type PPIase family. Tig subfamily.

The protein localises to the cytoplasm. It catalyses the reaction [protein]-peptidylproline (omega=180) = [protein]-peptidylproline (omega=0). Functionally, involved in protein export. Acts as a chaperone by maintaining the newly synthesized protein in an open conformation. Functions as a peptidyl-prolyl cis-trans isomerase. The polypeptide is Trigger factor (Anoxybacillus flavithermus (strain DSM 21510 / WK1)).